The primary structure comprises 321 residues: Phospho-N-acetylmuramoyl-pentapeptide-transferase (321 aa).

Helical transmembrane passes span 6-26 (MLIPMVSAFAITIMFMPLFIG), 53-73 (TMGGLIFIAAIIVSAIWVGIW), 77-97 (LTLSVWVSLFILVLYGLLGFY), 121-141 (ILGAIIFLIAYFHEGFDHTLW), 144-164 (IIGNVSAAWFYVLFVIVWLVG), 175-195 (LDGLVAGQTTISFGTYAIIAA), 200-220 (TDVLIVCLVTIGAMLGFLMFN), 226-246 (IFMGDLGSLALGGMLAVVAIL), 251-271 (WSLLLIGIIYVTETASVILQV), and 301-321 (IDLTFWLVGLIGSGIYLAFFL).

The protein belongs to the glycosyltransferase 4 family. MraY subfamily. Requires Mg(2+) as cofactor.

Its subcellular location is the cell membrane. The catalysed reaction is UDP-N-acetyl-alpha-D-muramoyl-L-alanyl-gamma-D-glutamyl-L-lysyl-D-alanyl-D-alanine + di-trans,octa-cis-undecaprenyl phosphate = Mur2Ac(oyl-L-Ala-gamma-D-Glu-L-Lys-D-Ala-D-Ala)-di-trans,octa-cis-undecaprenyl diphosphate + UMP. It participates in cell wall biogenesis; peptidoglycan biosynthesis. Its function is as follows. Catalyzes the initial step of the lipid cycle reactions in the biosynthesis of the cell wall peptidoglycan: transfers peptidoglycan precursor phospho-MurNAc-pentapeptide from UDP-MurNAc-pentapeptide onto the lipid carrier undecaprenyl phosphate, yielding undecaprenyl-pyrophosphoryl-MurNAc-pentapeptide, known as lipid I. The sequence is that of Phospho-N-acetylmuramoyl-pentapeptide-transferase from Lacticaseibacillus paracasei (strain ATCC 334 / BCRC 17002 / CCUG 31169 / CIP 107868 / KCTC 3260 / NRRL B-441) (Lactobacillus paracasei).